The primary structure comprises 172 residues: Adenine phosphoribosyltransferase (172 aa).

The protein belongs to the purine/pyrimidine phosphoribosyltransferase family. Homodimer.

The protein localises to the cytoplasm. It catalyses the reaction AMP + diphosphate = 5-phospho-alpha-D-ribose 1-diphosphate + adenine. Its pathway is purine metabolism; AMP biosynthesis via salvage pathway; AMP from adenine: step 1/1. Functionally, catalyzes a salvage reaction resulting in the formation of AMP, that is energically less costly than de novo synthesis. The polypeptide is Adenine phosphoribosyltransferase (Hydrogenovibrio crunogenus (strain DSM 25203 / XCL-2) (Thiomicrospira crunogena)).